We begin with the raw amino-acid sequence, 55 residues long: Large ribosomal subunit protein bL33 (55 aa).

Belongs to the bacterial ribosomal protein bL33 family.

The polypeptide is Large ribosomal subunit protein bL33 (Arthrobacter sp. (strain FB24)).